Reading from the N-terminus, the 195-residue chain is Holliday junction branch migration complex subunit RuvA (195 aa).

A domain I region spans residues 1-64; it reads MIKGVEGEIT…DRAPEIYGFK (64 aa). Residues 65-137 are domain II; it reads DRAEYNVFLM…LYDLVKDYAV (73 aa). Residues 137–141 are flexible linker; the sequence is VEFPK. Positions 142–195 are domain III; it reads ELSDVSEDAVGALTALGFDMTSAKLAVNEVLKEQTVENTQELVRKALRKLNKTR.

It belongs to the RuvA family. Homotetramer. Forms an RuvA(8)-RuvB(12)-Holliday junction (HJ) complex. HJ DNA is sandwiched between 2 RuvA tetramers; dsDNA enters through RuvA and exits via RuvB. An RuvB hexamer assembles on each DNA strand where it exits the tetramer. Each RuvB hexamer is contacted by two RuvA subunits (via domain III) on 2 adjacent RuvB subunits; this complex drives branch migration. In the full resolvosome a probable DNA-RuvA(4)-RuvB(12)-RuvC(2) complex forms which resolves the HJ.

It is found in the cytoplasm. Its function is as follows. The RuvA-RuvB-RuvC complex processes Holliday junction (HJ) DNA during genetic recombination and DNA repair, while the RuvA-RuvB complex plays an important role in the rescue of blocked DNA replication forks via replication fork reversal (RFR). RuvA specifically binds to HJ cruciform DNA, conferring on it an open structure. The RuvB hexamer acts as an ATP-dependent pump, pulling dsDNA into and through the RuvAB complex. HJ branch migration allows RuvC to scan DNA until it finds its consensus sequence, where it cleaves and resolves the cruciform DNA. The protein is Holliday junction branch migration complex subunit RuvA of Kosmotoga olearia (strain ATCC BAA-1733 / DSM 21960 / TBF 19.5.1).